The chain runs to 319 residues: Pantothenate kinase (319 aa).

96–103 (GSVAVGKS) is a binding site for ATP.

The protein belongs to the prokaryotic pantothenate kinase family.

It is found in the cytoplasm. The catalysed reaction is (R)-pantothenate + ATP = (R)-4'-phosphopantothenate + ADP + H(+). The protein operates within cofactor biosynthesis; coenzyme A biosynthesis; CoA from (R)-pantothenate: step 1/5. This Bacillus velezensis (strain DSM 23117 / BGSC 10A6 / LMG 26770 / FZB42) (Bacillus amyloliquefaciens subsp. plantarum) protein is Pantothenate kinase.